Here is a 210-residue protein sequence, read N- to C-terminus: RNA binding protein, mRNA processing factor 2 (210 aa).

Residues 1 to 10 (MSNLKPDVEH) show a composition bias toward basic and acidic residues. Residues 1–25 (MSNLKPDVEHCTGAGTGTGTGPSGP) are disordered. An N-acetylserine modification is found at serine 2. In terms of domain architecture, RRM spans 31–108 (RTLFVSGLPV…QTLRLEFAKA (78 aa)). Positions 41-51 (DIKPRELYLLF) are important for homodimerization.

In terms of assembly, homodimer. Interacts with EEF2.

The protein localises to the cytoplasm. It localises to the nucleus. Its subcellular location is the stress granule. Functionally, RNA-binding protein involved in the regulation of smooth muscle cell differentiation and proliferation in the gastrointestinal system. Binds NOG mRNA, the major inhibitor of the bone morphogenetic protein (BMP) pathway. Mediates an increase of NOG mRNA levels, thereby contributing to the negative regulation of BMP signaling pathway and promoting reversible dedifferentiation and proliferation of smooth muscle cells. Acts as a pre-mRNA alternative splicing regulator. Mediates ACTN1 and FLNB alternative splicing. Likely binds to mRNA tandem CAC trinucleotide or CA dinucleotide motifs. This chain is RNA binding protein, mRNA processing factor 2 (Rbpms2), found in Rattus norvegicus (Rat).